The chain runs to 348 residues: Dihydroorotase (348 aa).

Zn(2+) is bound by residues His-14 and His-16. Substrate-binding positions include 16-18 (HLR) and Asn-42. Residues Lys-100, His-137, and His-175 each contribute to the Zn(2+) site. N6-carboxylysine is present on Lys-100. His-137 is a substrate binding site. Leu-220 provides a ligand contact to substrate. Position 248 (Asp-248) interacts with Zn(2+). The active site involves Asp-248. Positions 252 and 264 each coordinate substrate.

This sequence belongs to the metallo-dependent hydrolases superfamily. DHOase family. Class II DHOase subfamily. In terms of assembly, homodimer. The cofactor is Zn(2+).

It catalyses the reaction (S)-dihydroorotate + H2O = N-carbamoyl-L-aspartate + H(+). It functions in the pathway pyrimidine metabolism; UMP biosynthesis via de novo pathway; (S)-dihydroorotate from bicarbonate: step 3/3. In terms of biological role, catalyzes the reversible cyclization of carbamoyl aspartate to dihydroorotate. In Pseudomonas fluorescens (strain SBW25), this protein is Dihydroorotase.